Here is a 162-residue protein sequence, read N- to C-terminus: Large ribosomal subunit protein uL30 (162 aa).

Belongs to the universal ribosomal protein uL30 family. As to quaternary structure, part of the 50S ribosomal subunit.

In Korarchaeum cryptofilum (strain OPF8), this protein is Large ribosomal subunit protein uL30.